The primary structure comprises 344 residues: Nicotinate-nucleotide--dimethylbenzimidazole phosphoribosyltransferase (344 aa).

Glu310 (proton acceptor) is an active-site residue.

This sequence belongs to the CobT family.

It catalyses the reaction 5,6-dimethylbenzimidazole + nicotinate beta-D-ribonucleotide = alpha-ribazole 5'-phosphate + nicotinate + H(+). It participates in nucleoside biosynthesis; alpha-ribazole biosynthesis; alpha-ribazole from 5,6-dimethylbenzimidazole: step 1/2. Functionally, catalyzes the synthesis of alpha-ribazole-5'-phosphate from nicotinate mononucleotide (NAMN) and 5,6-dimethylbenzimidazole (DMB). The sequence is that of Nicotinate-nucleotide--dimethylbenzimidazole phosphoribosyltransferase from Chromobacterium violaceum (strain ATCC 12472 / DSM 30191 / JCM 1249 / CCUG 213 / NBRC 12614 / NCIMB 9131 / NCTC 9757 / MK).